We begin with the raw amino-acid sequence, 405 residues long: Lariat debranching enzyme (405 aa).

Cysteine 11, histidine 13, aspartate 40, and asparagine 85 together coordinate a divalent metal cation. Residues 125 to 159 (SGIWKEWDFNKQRPDWNDLENNNWKANIRNLYHVR) are lariat recognition loop. Positions 179, 231, and 233 each coordinate a divalent metal cation. Residues 242 to 277 (HNKRSHEPPNKSTSKTKKNNNEIDLDLSSDEDERSG) are disordered. Residues 264 to 274 (IDLDLSSDEDE) are compositionally biased toward acidic residues. Phosphoserine is present on serine 269.

The protein belongs to the lariat debranching enzyme family. Requires Fe(2+) as cofactor. The cofactor is Zn(2+). Mn(2+) is required as a cofactor.

Its subcellular location is the nucleus. It is found in the cytoplasm. Its activity is regulated as follows. Active in presence of diverse metals including Fe(2+), Zn(2+) and Mn(2+). Binds two metal cations in two adjacent alpha and beta metal-binding pockets. The activity is the highest with Fe(2+) bound to the 2 metal-binding sites. Activity is low with Zn(2+) and Mn(2+). Cleaves the 2'-5' phosphodiester linkage at the branch point of lariat intron pre-mRNAs after splicing and converts them into linear molecules that are subsequently degraded, thereby facilitating ribonucleotide turnover. It also participates in Ty1 retrovirus-like transposition via an RNA lariat intermediate in cDNA synthesis. The chain is Lariat debranching enzyme (DBR1) from Saccharomyces cerevisiae (strain ATCC 204508 / S288c) (Baker's yeast).